A 468-amino-acid polypeptide reads, in one-letter code: ATP synthase subunit beta (468 aa).

155 to 162 (GGAGVGKT) contributes to the ATP binding site.

Belongs to the ATPase alpha/beta chains family. F-type ATPases have 2 components, CF(1) - the catalytic core - and CF(0) - the membrane proton channel. CF(1) has five subunits: alpha(3), beta(3), gamma(1), delta(1), epsilon(1). CF(0) has three main subunits: a(1), b(2) and c(9-12). The alpha and beta chains form an alternating ring which encloses part of the gamma chain. CF(1) is attached to CF(0) by a central stalk formed by the gamma and epsilon chains, while a peripheral stalk is formed by the delta and b chains.

The protein resides in the cell membrane. It carries out the reaction ATP + H2O + 4 H(+)(in) = ADP + phosphate + 5 H(+)(out). Functionally, produces ATP from ADP in the presence of a proton gradient across the membrane. The catalytic sites are hosted primarily by the beta subunits. The protein is ATP synthase subunit beta of Streptococcus uberis (strain ATCC BAA-854 / 0140J).